A 472-amino-acid polypeptide reads, in one-letter code: Ribulose bisphosphate carboxylase large chain (472 aa).

Substrate contacts are provided by Asn-116 and Thr-166. Residue Lys-168 is the Proton acceptor of the active site. Lys-170 lines the substrate pocket. Residues Lys-194, Asp-196, and Glu-197 each coordinate Mg(2+). Lys-194 is modified (N6-carboxylysine). His-287 functions as the Proton acceptor in the catalytic mechanism. Substrate is bound by residues Arg-288, His-320, and Ser-372.

Belongs to the RuBisCO large chain family. Type I subfamily. In terms of assembly, heterohexadecamer of 8 large chains and 8 small chains. Mg(2+) serves as cofactor.

The catalysed reaction is 2 (2R)-3-phosphoglycerate + 2 H(+) = D-ribulose 1,5-bisphosphate + CO2 + H2O. The enzyme catalyses D-ribulose 1,5-bisphosphate + O2 = 2-phosphoglycolate + (2R)-3-phosphoglycerate + 2 H(+). Functionally, ruBisCO catalyzes two reactions: the carboxylation of D-ribulose 1,5-bisphosphate, the primary event in carbon dioxide fixation, as well as the oxidative fragmentation of the pentose substrate. Both reactions occur simultaneously and in competition at the same active site. This chain is Ribulose bisphosphate carboxylase large chain, found in Nitrobacter vulgaris.